Reading from the N-terminus, the 682-residue chain is MSTRLTTLSHTSEGHRVSVHYGYDDKGRLTGERQTVENPETGELLWHHETGHAYNEQGLANRVTPDSLPPVEWLTYGSGYLAGMKLGGTPLLEFTRDRLHRETVRSFGSMAGSNAAYKLTSTYTPAGQLQSQHLNSLVYDRDYGWNDNGDLVRISGPRQTREYGYSATGRLESVRTLAPDLDIRIPYATDPAGNRLPDPELHPDSTLTVWPDNRIAEDAHYVYRHDEYGRLTEKTDRIPAGVIRTDDERTHHYHYDSQHRLVFYTRIQHGEPLVESRYLYDPLGRRMAKRVWRRERDLTGWMSLSRKPEVTWYGWDGDRLTTVQTDTTRIQTVYEPGSFTPLIRVETENGEREKAQRRSLAETLQQEGSENGHGVVFPAELVRLLDRLEEEIRADRVSSESRAWLAQCGLTVEQLARQVEPEYTPARKVHFYHCDHRGLPLALISEDGNTAWRGEYDEWGNQLNEENPHHLHQPYRLPGQQHDEESGLYYNRHRHYDPLQGRYITPDPIGLRGGWNMYQYPLNPIQVIDPMGLDAIENMTSGGLIYAVSGVPGLIAANSITNSAYQFGYDMDAIVGGAHNGAADAMRHCYLMCRMTKTFGSTIADVIGKNHEAAGDRQGQPAKERIMDLKNNTVGIACGDFSAKCSDACIEKYNTGQLFGLDGIKADNPIKAKQGSSDASNY.

Basic and acidic residues predominate over residues 348-360 (ENGEREKAQRRSL). The interval 348 to 372 (ENGEREKAQRRSLAETLQQEGSENG) is disordered.

The protein belongs to the RHS family.

Its function is as follows. Rhs elements have a nonessential function. They may play an important role in the natural ecology of the cell. The chain is Putative protein RhsE (rhsE) from Escherichia coli (strain K12).